The following is a 135-amino-acid chain: ATP synthase epsilon chain (135 aa).

The protein belongs to the ATPase epsilon chain family. F-type ATPases have 2 components, CF(1) - the catalytic core - and CF(0) - the membrane proton channel. CF(1) has five subunits: alpha(3), beta(3), gamma(1), delta(1), epsilon(1). CF(0) has three main subunits: a, b and c.

The protein resides in the cell inner membrane. Its function is as follows. Produces ATP from ADP in the presence of a proton gradient across the membrane. This chain is ATP synthase epsilon chain, found in Allorhizobium ampelinum (strain ATCC BAA-846 / DSM 112012 / S4) (Agrobacterium vitis (strain S4)).